Reading from the N-terminus, the 652-residue chain is Acetolactate synthase 3, chloroplastic (652 aa).

The segment covering 1-20 has biased composition (polar residues); that stretch reads MAAATSSSPISLTAKPSSKS. The tract at residues 1-23 is disordered; it reads MAAATSSSPISLTAKPSSKSPLP. A chloroplast-targeting transit peptide spans 1-69; sequence MAAATSSSPI…PEKTDKIKTF (69 aa). Glu126 provides a ligand contact to thiamine diphosphate. FAD is bound by residues Arg228, 334-355, and 377-396; these read HGTV…FGVR and DIDS…VCGD. Residues 469–549 form a thiamine pyrophosphate binding region; that stretch reads QHQMWAAQFY…VKILLLNNQH (81 aa). The Mg(2+) site is built by Asp520 and Asn547.

It belongs to the TPP enzyme family. Mg(2+) serves as cofactor. Requires thiamine diphosphate as cofactor.

It localises to the plastid. Its subcellular location is the chloroplast. It carries out the reaction 2 pyruvate + H(+) = (2S)-2-acetolactate + CO2. Its pathway is amino-acid biosynthesis; L-isoleucine biosynthesis; L-isoleucine from 2-oxobutanoate: step 1/4. The protein operates within amino-acid biosynthesis; L-valine biosynthesis; L-valine from pyruvate: step 1/4. The sequence is that of Acetolactate synthase 3, chloroplastic from Brassica napus (Rape).